A 314-amino-acid polypeptide reads, in one-letter code: Aromatic prenyltransferase (314 aa).

The protein belongs to the aromatic prenyltransferase family.

In terms of biological role, prenyltransferase that attaches isoprenoid moieties to carbon atoms of aromatic substrates in an enzyme-catalyzed Friedel-Crafts reaction. The polypeptide is Aromatic prenyltransferase (Arthroderma otae (strain ATCC MYA-4605 / CBS 113480) (Microsporum canis)).